The chain runs to 235 residues: NAD-dependent protein deacylase (235 aa).

The region spanning 1–235 is the Deacetylase sirtuin-type domain; sequence MDLRLFKNIV…VPRFITQFLE (235 aa). NAD(+) is bound at residue 14-33; it reads GAGISAESGIRTFRDQDGLW. Tyr58 and Arg61 together coordinate substrate. Residue 95–98 coordinates NAD(+); that stretch reads QNVD. His113 acts as the Proton acceptor in catalysis. Residues Cys121, Cys124, Cys140, and Cys143 each coordinate Zn(2+). NAD(+)-binding positions include 180 to 182, 204 to 206, and Ala222; these read GTS and NLK.

The protein belongs to the sirtuin family. Class III subfamily. Requires Zn(2+) as cofactor.

The protein resides in the cytoplasm. The enzyme catalyses N(6)-acetyl-L-lysyl-[protein] + NAD(+) + H2O = 2''-O-acetyl-ADP-D-ribose + nicotinamide + L-lysyl-[protein]. It carries out the reaction N(6)-succinyl-L-lysyl-[protein] + NAD(+) + H2O = 2''-O-succinyl-ADP-D-ribose + nicotinamide + L-lysyl-[protein]. NAD-dependent lysine deacetylase and desuccinylase that specifically removes acetyl and succinyl groups on target proteins. Modulates the activities of several proteins which are inactive in their acylated form. The protein is NAD-dependent protein deacylase of Bdellovibrio bacteriovorus (strain ATCC 15356 / DSM 50701 / NCIMB 9529 / HD100).